The sequence spans 534 residues: Peptide chain release factor 3 (534 aa).

A tr-type G domain is found at 9–278 (ARRRTFAIIS…FFVEHAPPPQ (270 aa)). GTP is bound by residues 18-25 (SHPDAGKT), 86-90 (DTPGH), and 140-143 (NKLD).

This sequence belongs to the TRAFAC class translation factor GTPase superfamily. Classic translation factor GTPase family. PrfC subfamily.

Its subcellular location is the cytoplasm. Its function is as follows. Increases the formation of ribosomal termination complexes and stimulates activities of RF-1 and RF-2. It binds guanine nucleotides and has strong preference for UGA stop codons. It may interact directly with the ribosome. The stimulation of RF-1 and RF-2 is significantly reduced by GTP and GDP, but not by GMP. The chain is Peptide chain release factor 3 from Xanthomonas euvesicatoria pv. vesicatoria (strain 85-10) (Xanthomonas campestris pv. vesicatoria).